A 421-amino-acid chain; its full sequence is Imidazolonepropionase (421 aa).

Residues H81 and H83 each contribute to the Fe(3+) site. Zn(2+)-binding residues include H81 and H83. Positions 90, 153, and 186 each coordinate 4-imidazolone-5-propanoate. Y153 is a binding site for N-formimidoyl-L-glutamate. H251 provides a ligand contact to Fe(3+). H251 contacts Zn(2+). E254 contacts 4-imidazolone-5-propanoate. D326 is a binding site for Fe(3+). Zn(2+) is bound at residue D326. 2 residues coordinate N-formimidoyl-L-glutamate: N328 and G330. Position 331 (S331) interacts with 4-imidazolone-5-propanoate.

It belongs to the metallo-dependent hydrolases superfamily. HutI family. Zn(2+) serves as cofactor. It depends on Fe(3+) as a cofactor.

It is found in the cytoplasm. The catalysed reaction is 4-imidazolone-5-propanoate + H2O = N-formimidoyl-L-glutamate. Its pathway is amino-acid degradation; L-histidine degradation into L-glutamate; N-formimidoyl-L-glutamate from L-histidine: step 3/3. In terms of biological role, catalyzes the hydrolytic cleavage of the carbon-nitrogen bond in imidazolone-5-propanoate to yield N-formimidoyl-L-glutamate. It is the third step in the universal histidine degradation pathway. The protein is Imidazolonepropionase of Streptococcus pyogenes serotype M12 (strain MGAS2096).